The following is a 221-amino-acid chain: MDGYYSLSPISVLHRIKDSFHFAVSALLANLFSALFTFFFALVGTLLGALTGALIGQETESGFIRGAAVGAISGAVFSIEVFESSLLLWQSDESGIGCLLYLIDVIASLLSGRLVRERIGPAMLSAVQSQMGAVESQFQDHTDIFDTAISKGLTGDSLNRIPKVRITDTSPEIVSCSVCLQDFQVGETVRSLPHCHHMFHLPCIDKWLRRHASCPLCRRHL.

3 consecutive transmembrane segments (helical) span residues 35–55, 69–89, and 95–115; these read LFTF…GALI, VGAI…LLLW, and GIGC…GRLV. An RING-type; atypical zinc finger spans residues 176 to 218; sequence CSVCLQDFQVGETVRSLPHCHHMFHLPCIDKWLRRHASCPLCR.

Belongs to the RING-type zinc finger family. NIP subfamily.

It is found in the membrane. Functionally, may be involved in the early steps of the plant defense signaling pathway. The protein is NEP1-interacting protein-like 1 (ATL27) of Arabidopsis thaliana (Mouse-ear cress).